We begin with the raw amino-acid sequence, 98 residues long: Small ribosomal subunit protein uS19 (98 aa).

Disordered stretches follow at residues 1–30 (MARS…KKSV) and 78–98 (RTFH…PAKK). The span at 9-24 (PFADKHLTKKVEDANK) shows a compositional bias: basic and acidic residues.

This sequence belongs to the universal ribosomal protein uS19 family.

Functionally, protein S19 forms a complex with S13 that binds strongly to the 16S ribosomal RNA. The protein is Small ribosomal subunit protein uS19 of Anaeromyxobacter dehalogenans (strain 2CP-C).